A 657-amino-acid polypeptide reads, in one-letter code: Interferon-induced GTP-binding protein Mx1 (657 aa).

At methionine 1 the chain carries N-acetylmethionine. Positions 63 to 336 (DLALPAIAVI…LITHICKTLP (274 aa)) constitute a Dynamin-type G domain. The interval 73 to 80 (GDQSSGKS) is G1 motif. 73 to 80 (GDQSSGKS) is a binding site for GTP. Residues 98 to 100 (VTR) are G2 motif. The segment at 174–177 (DLPG) is G3 motif. Residues 174 to 178 (DLPGI) and 243 to 246 (TKPD) each bind GTP. A G4 motif region spans residues 243–246 (TKPD). A G5 motif region spans residues 275-278 (KCRG). A bundle signaling element (BSE) region spans residues 337 to 362 (LLENQIKENHEKITEELQKYGSDVPE). The interval 362–529 (EDEHEKMFFL…HFQMEQIVYC (168 aa)) is middle domain. Residues 363–627 (DEHEKMFFLI…KDTYSWLLKE (265 aa)) form a stalk region. A compositionally biased stretch (basic and acidic residues) spans 540 to 551 (RVREKDSDEEKK). The segment at 540–559 (RVREKDSDEEKKKKTSSMSH) is disordered. The tract at residues 550–553 (KKKK) is critical for lipid-binding. The GED domain maps to 569 to 657 (LSEILEHLLA…ARRRLAKFPG (89 aa)).

The protein belongs to the TRAFAC class dynamin-like GTPase superfamily. Dynamin/Fzo/YdjA family. As to quaternary structure, homooligomer. Oligomerizes into multimeric filamentous or ring-like structures by virtue of its stalk domain. Oligomerization is critical for GTPase activity, protein stability, and recognition of viral target structures. Interacts with TRPC1, TRPC3, TRPC4, TRPC5, TRPC6 and TRPC7. Interacts with HSPA5. Interacts with TUBB/TUBB5. Interacts with DDX39A and DDX39B. ISGylated.

It localises to the cytoplasm. The protein resides in the endoplasmic reticulum membrane. It is found in the perinuclear region. In terms of biological role, interferon-induced dynamin-like GTPase with antiviral activity. The protein is Interferon-induced GTP-binding protein Mx1 (MX1) of Canis lupus familiaris (Dog).